Reading from the N-terminus, the 567-residue chain is Monodechloroaminopyrrolnitrin halogenase PrnC (567 aa).

It functions in the pathway antibiotic biosynthesis. In terms of biological role, involved in the biosynthesis of the antifungal antibiotic pyrrolnitrin. Catalyzes the chlorination of monodechloroaminopyrrolnitrin (MDA) at the 3 position to form aminopyrrolnitrin (APRN). This chain is Monodechloroaminopyrrolnitrin halogenase PrnC (prnC), found in Pseudomonas fluorescens.